The primary structure comprises 142 residues: Small ribosomal subunit protein eS6 (142 aa).

The segment at 117-142 (EKPLDELAPKKEKKEGAAGGRAPAKK) is disordered. Positions 118-132 (KPLDELAPKKEKKEG) are enriched in basic and acidic residues.

The protein belongs to the eukaryotic ribosomal protein eS6 family.

The protein is Small ribosomal subunit protein eS6 of Methanocella arvoryzae (strain DSM 22066 / NBRC 105507 / MRE50).